The chain runs to 376 residues: Metal tolerance protein 6 (376 aa).

Residues 1–28 form a disordered region; it reads MAAAAGVAAGTGRGSGEGEELLPNAVEG. Topologically, residues 1-123 are cytoplasmic; the sequence is MAAAAGVAAG…CEKVARSEAL (123 aa). Residues 124-144 form a helical membrane-spanning segment; sequence AIRLSNIANMVLFAAKVYASI. The Vacuolar segment spans residues 145 to 149; it reads RSGSL. The chain crosses the membrane as a helical span at residues 150 to 170; it reads AIIASTLDSLLDLLSGFILWF. Over 171–191 the chain is Cytoplasmic; it reads TAFSKKTSNPYRYPIGKRRMQ. A helical membrane pass occupies residues 192-212; sequence PLGILVFASVMATLGLQIILE. Topologically, residues 213-231 are vacuolar; sequence STRSLFYDGDTFRLTKEQE. A helical membrane pass occupies residues 232–252; the sequence is KWVVDIMLSVTSVKLLLVVYC. Topologically, residues 253–376 are cytoplasmic; that stretch reads RSFTNEILAI…PEHARSHDTL (124 aa).

It belongs to the cation diffusion facilitator (CDF) transporter (TC 2.A.4) family. SLC30A subfamily.

The protein resides in the vacuole membrane. In terms of biological role, involved in sequestration of excess metal in the cytoplasm into vacuoles to maintain metal homeostasis. This Oryza sativa subsp. japonica (Rice) protein is Metal tolerance protein 6 (MTP6).